A 346-amino-acid polypeptide reads, in one-letter code: DNA-directed RNA polymerases I and III subunit RPAC1 (346 aa).

Ala2 is modified (N-acetylalanine). At Ser4 the chain carries Phosphoserine.

Belongs to the archaeal Rpo3/eukaryotic RPB3 RNA polymerase subunit family. Component of the RNA polymerase I and RNA polymerase III complexes consisting of at least 13 and 17 subunits, respectively. Pol I complex consists of a ten-subunit catalytic core composed of POLR1A/RPA1, POLR1B/RPA2, POLR1C/RPAC1, POLR1D/RPAC2, POLR1H/RPA12, POLR2E/RPABC1, POLR2F/RPABC2, POLR2H/RPABC3, POLR2K/RPABC4 and POLR2L/RPABC5; a mobile stalk subunit POLR1F/RPA43 protruding from the core and additional subunits homologous to general transcription factors POLR1E/RPA49 and POLR1G/RPA34. Part of Pol I pre-initiation complex (PIC), in which Pol I core assembles with RRN3 and promoter-bound UTBF and SL1/TIF-IB complex. Pol III complex consists of a ten-subunit catalytic core composed of POLR3A/RPC1, POLR3B/RPC2, POLR1C/RPAC1, POLR1D/RPAC2, POLR3K/RPC10, POLR2E/RPABC1, POLR2F/RPABC2, POLR2H/RPABC3, POLR2K/RPABC4 and POLR2L/RPABC5; a mobile stalk composed of two subunits POLR3H/RPC8 and CRCP/RPC9, protruding from the core and functioning primarily in transcription initiation; and additional subunits homologous to general transcription factors of the RNA polymerase II machinery, POLR3C/RPC3-POLR3F/RPC6-POLR3G/RPC7 heterotrimer required for transcription initiation and POLR3D/RPC4-POLR3E/RPC5 heterodimer involved in both transcription initiation and termination.

The protein resides in the nucleus. Its subcellular location is the nucleolus. It is found in the cytoplasm. It localises to the cytosol. Its function is as follows. DNA-dependent RNA polymerase catalyzes the transcription of DNA into RNA using the four ribonucleoside triphosphates as substrates. Common component of RNA polymerases I and III which synthesize ribosomal RNA precursors and short non-coding RNAs including 5S rRNA, snRNAs, tRNAs and miRNAs, respectively. POLR1C/RPAC1 is part of the polymerase core and may function as a clamp element that moves to open and close the cleft. In Homo sapiens (Human), this protein is DNA-directed RNA polymerases I and III subunit RPAC1.